We begin with the raw amino-acid sequence, 118 residues long: Holo-[acyl-carrier-protein] synthase (118 aa).

Asp-8 and Glu-58 together coordinate Mg(2+).

It belongs to the P-Pant transferase superfamily. AcpS family. Mg(2+) is required as a cofactor.

Its subcellular location is the cytoplasm. It carries out the reaction apo-[ACP] + CoA = holo-[ACP] + adenosine 3',5'-bisphosphate + H(+). Its function is as follows. Transfers the 4'-phosphopantetheine moiety from coenzyme A to a Ser of acyl-carrier-protein. The sequence is that of Holo-[acyl-carrier-protein] synthase from Streptococcus equi subsp. zooepidemicus (strain MGCS10565).